Here is a 356-residue protein sequence, read N- to C-terminus: L-lactate dehydrogenase A (356 aa).

NAD(+) is bound by residues 75 to 80 (DALPDK) and R121. R128, N160, and R191 together coordinate substrate. N160 contacts NAD(+). The Proton acceptor role is filled by H215. Residue T270 participates in substrate binding.

The protein belongs to the LDH/MDH superfamily. LDH family. As to quaternary structure, tetramer that arise from random association of LDH-A and LDH-B.

It carries out the reaction (S)-lactate + NAD(+) = pyruvate + NADH + H(+). Its pathway is fermentation; pyruvate fermentation to lactate; (S)-lactate from pyruvate: step 1/1. The protein is L-lactate dehydrogenase A of Hordeum vulgare (Barley).